Here is a 301-residue protein sequence, read N- to C-terminus: Probable alpha-L-glutamate ligase (301 aa).

The ATP-grasp domain maps to 104–287 (LQLLSRRGVG…IASQIIAFIE (184 aa)). Residues K141, 178–179 (EF), D187, and 211–213 (RSN) contribute to the ATP site. Mg(2+) contacts are provided by D248, E260, and N262. Mn(2+)-binding residues include D248, E260, and N262.

It belongs to the RimK family. Mg(2+) serves as cofactor. Requires Mn(2+) as cofactor.

This chain is Probable alpha-L-glutamate ligase, found in Hydrogenovibrio crunogenus (strain DSM 25203 / XCL-2) (Thiomicrospira crunogena).